Consider the following 382-residue polypeptide: Mannitol-1-phosphate 5-dehydrogenase (382 aa).

3-14 (ALHFGAGNIGRG) provides a ligand contact to NAD(+).

Belongs to the mannitol dehydrogenase family.

The catalysed reaction is D-mannitol 1-phosphate + NAD(+) = beta-D-fructose 6-phosphate + NADH + H(+). The chain is Mannitol-1-phosphate 5-dehydrogenase (mtlD) from Klebsiella pneumoniae.